Reading from the N-terminus, the 37-residue chain is Large ribosomal subunit protein bL36 (37 aa).

This sequence belongs to the bacterial ribosomal protein bL36 family.

The polypeptide is Large ribosomal subunit protein bL36 (Staphylococcus aureus (strain Mu3 / ATCC 700698)).